A 125-amino-acid polypeptide reads, in one-letter code: E4-ORF1 (125 aa).

A PDZ-binding motif is present at residues 122–125 (ATLV).

This sequence belongs to the dUTPase family. Binds to human MPDZ.

Its subcellular location is the host cytoplasm. The enzyme catalyses dUTP + H2O = dUMP + diphosphate + H(+). Functionally, plays a key role in virus oncogenecity in animals. Binds and sequesters human MUPP1/MPDZ protein in the cytoplasm, preventing it from playing a role in cellular proliferation regulation. Induces cell transformation, probably by inactivating MPDZ protein. This is E4-ORF1 (E4) from Homo sapiens (Human).